The primary structure comprises 260 residues: MDRHSSYIFVWLQLELCAMAVLLTKGEIRCYCDAAHCVATGYMCKSELSACFSRLLDPQNTNSPLTHGCLDSLASTADICQARQARNHSGSPLPSLECCHEDMCNYRGLQDVLTPPKGEASGQGNRYQHDGSRNLITKVQELTSSKELWFRAAVIAVPIAGGLILVLLIMLALRMLRSENKRLQEQRQQMLSRLHYSFHGHHSKKGQVAKLDLECMVPVSGHENCCLTCDKMRQADLSHDRILSLVHWGMYSGHGKLEFV.

The signal sequence occupies residues 1-26 (MDRHSSYIFVWLQLELCAMAVLLTKG). The Extracellular segment spans residues 27–152 (EIRCYCDAAH…TSSKELWFRA (126 aa)). A glycan (N-linked (GlcNAc...) asparagine) is linked at asparagine 87. Residues 153-173 (AVIAVPIAGGLILVLLIMLAL) traverse the membrane as a helical segment. Topologically, residues 174-260 (RMLRSENKRL…YSGHGKLEFV (87 aa)) are cytoplasmic.

Belongs to the BAMBI family.

It is found in the membrane. Functionally, negatively regulates TGF-beta signaling. This chain is BMP and activin membrane-bound inhibitor homolog (BAMBI), found in Ovis aries (Sheep).